Consider the following 513-residue polypeptide: Trigger factor (513 aa).

The PPIase FKBP-type domain occupies 164-249 (GDQIIIDFLG…VKAVKNAGEF (86 aa)). The tract at residues 436–513 (QAAIEAEEGA…KAPAKKKAEG (78 aa)) is disordered. Residues 452-461 (AKKAPAKKKA) show a composition bias toward basic residues. Over residues 489 to 498 (ADEAPAAEEA) the composition is skewed to low complexity. A compositionally biased stretch (basic residues) spans 501–513 (AKKKAPAKKKAEG).

This sequence belongs to the FKBP-type PPIase family. Tig subfamily.

Its subcellular location is the cytoplasm. It carries out the reaction [protein]-peptidylproline (omega=180) = [protein]-peptidylproline (omega=0). Involved in protein export. Acts as a chaperone by maintaining the newly synthesized protein in an open conformation. Functions as a peptidyl-prolyl cis-trans isomerase. The polypeptide is Trigger factor (Novosphingobium aromaticivorans (strain ATCC 700278 / DSM 12444 / CCUG 56034 / CIP 105152 / NBRC 16084 / F199)).